Here is a 113-residue protein sequence, read N- to C-terminus: Large ribosomal subunit protein uL22 (113 aa).

This sequence belongs to the universal ribosomal protein uL22 family. Part of the 50S ribosomal subunit.

Functionally, this protein binds specifically to 23S rRNA; its binding is stimulated by other ribosomal proteins, e.g. L4, L17, and L20. It is important during the early stages of 50S assembly. It makes multiple contacts with different domains of the 23S rRNA in the assembled 50S subunit and ribosome. In terms of biological role, the globular domain of the protein is located near the polypeptide exit tunnel on the outside of the subunit, while an extended beta-hairpin is found that lines the wall of the exit tunnel in the center of the 70S ribosome. The protein is Large ribosomal subunit protein uL22 of Desulforamulus reducens (strain ATCC BAA-1160 / DSM 100696 / MI-1) (Desulfotomaculum reducens).